A 1510-amino-acid chain; its full sequence is Chromosome partition protein MukB (1510 aa).

Residues 6 to 30 (ELENEIELESDEVIMENENVEEIVD) are a coiled coil. ATP is bound at residue 75-82 (GGNGAGKS). 7 coiled-coil regions span residues 346 to 506 (QHRL…HKMS), 553 to 633 (QQTP…NLTA), 673 to 706 (MQSQLVKERELTMQRDQLEQKRLQLDEQISRLSQ), 821 to 847 (RAAREKRLEELQIERDEVAEQYAQIAF), 876 to 1064 (EELM…IQLQ), 1094 to 1149 (ERAR…RELV), and 1249 to 1305 (DAIE…QNIS). The tract at residues 707–824 (PDGSEDPRLN…EIPLFGRAAR (118 aa)) is flexible hinge.

Belongs to the SMC family. MukB subfamily. Homodimerization via its hinge domain. Binds to DNA via its C-terminal region. Interacts, and probably forms a ternary complex, with MukE and MukF via its C-terminal region. The complex formation is stimulated by calcium or magnesium. Interacts with tubulin-related protein FtsZ.

The protein localises to the cytoplasm. It localises to the nucleoid. Its function is as follows. Plays a central role in chromosome condensation, segregation and cell cycle progression. Functions as a homodimer, which is essential for chromosome partition. Involved in negative DNA supercoiling in vivo, and by this means organize and compact chromosomes. May achieve or facilitate chromosome segregation by condensation DNA from both sides of a centrally located replisome during cell division. In Haemophilus influenzae (strain 86-028NP), this protein is Chromosome partition protein MukB.